Consider the following 341-residue polypeptide: MAKLDFITLGIESSCDETGVGLYHSELGLIGHKLFSSVEIHSEYGGVVPELASRDHIQRVLPLIKTVLTNAKFTLQDLSGIAYTAGPGLAGALLVGSALAKSLAWSLGVPSLAVHHMEGHLLAPLLEESQPKFPFVALLVSGGHTMLIDVKAIGQYKILGKSLDDAVGEAFDKTAKILGLGYPGGPALEMLAKQGDTNTFKFPLPMVNRPGLDFSFSGLKTFARNTFTKHPNKKSDIAKAFEVATTQILMIKCRRALEKTGRITLVVAGGVSANLSLRSELNQMGRKVGVNIFYPRQEFCTDNGAMIALAGHFRLSDGQCDTNYEINIKPRWNIEELSQIK.

H116 and H120 together coordinate Fe cation. Substrate contacts are provided by residues 139 to 143, D172, G185, and N274; that span reads LVSGG. D302 contributes to the Fe cation binding site.

Belongs to the KAE1 / TsaD family. Fe(2+) is required as a cofactor.

It is found in the cytoplasm. It catalyses the reaction L-threonylcarbamoyladenylate + adenosine(37) in tRNA = N(6)-L-threonylcarbamoyladenosine(37) in tRNA + AMP + H(+). Functionally, required for the formation of a threonylcarbamoyl group on adenosine at position 37 (t(6)A37) in tRNAs that read codons beginning with adenine. Is involved in the transfer of the threonylcarbamoyl moiety of threonylcarbamoyl-AMP (TC-AMP) to the N6 group of A37, together with TsaE and TsaB. TsaD likely plays a direct catalytic role in this reaction. The chain is tRNA N6-adenosine threonylcarbamoyltransferase from Vesicomyosocius okutanii subsp. Calyptogena okutanii (strain HA).